The sequence spans 384 residues: MLHRIPAFLRPRPFSGLPLSCGNRDVSVAVLPAAQSGAVRTENNIQRHFCTSRSICSKKVDQSVPANEISQKAAESQGRGKETLKKDLLDIIKDMKVDLSTANVKTPKPRGRKPSASLEATVDRLQKAPEDPPKKRNEFLSPELVAAASAVADSLPFDKQTTKSELLRQLQQHEEELRAQKDREKRRISFTHIISNMKIAKSPSGRASTRPQHQIQFDEDMDSSLKQEKPTDFRKRKYLFKGKRLSIFADKAFADEPPEPEASPSLWEIEFAKQLASVADQPFENGFEEMIQWTKEGKLWEFPVNNEAGLDDDGSEFHEHIFLDKYLEDFPKQGPIRLFMELVTCGLSKNPYLSVKQKVEHIEWFRNYFNEKRDILKENNIAFT.

The transit peptide at 1 to 54 (MLHRIPAFLRPRPFSGLPLSCGNRDVSVAVLPAAQSGAVRTENNIQRHFCTSRS) directs the protein to the mitochondrion. Positions 101–136 (TANVKTPKPRGRKPSASLEATVDRLQKAPEDPPKKR) are disordered. The segment covering 121–136 (TVDRLQKAPEDPPKKR) has biased composition (basic and acidic residues).

The protein belongs to the mitochondrion-specific ribosomal protein mS31 family. As to quaternary structure, component of the mitochondrial ribosome small subunit (28S) which comprises a 12S rRNA and about 30 distinct proteins.

Its subcellular location is the mitochondrion. This chain is Small ribosomal subunit protein mS31 (Mrps31), found in Mus musculus (Mouse).